The sequence spans 374 residues: WW domain-binding protein 4 (374 aa).

The Matrin-type zinc finger occupies 11-42; the sequence is KFCDYCKCWIADNRPSVEFHERGKNHKENVAR. Over residues 91–109 the composition is skewed to polar residues; the sequence is EPTISPVTNTVQPTPTANQ. Disordered stretches follow at residues 91–126 and 188–328; these read EPTI…SKGR and SKWE…EAGA. Basic residues predominate over residues 112–121; it reads EKKKKKKKKE. 2 consecutive WW domains span residues 121 to 154 and 162 to 195; these read EASK…KPEG and TAAK…KPDD. Composition is skewed to basic and acidic residues over residues 188–197 and 205–270; these read SKWEKPDDFI and SSKD…EKTT. Phosphoserine occurs at positions 219, 226, and 228. A compositionally biased stretch (polar residues) spans 315 to 325; sequence STENECLSSSE. The tract at residues 355 to 373 is interaction with SNRNP200; it reads KKRRIENGKSRNLRQRGED.

In terms of assembly, component of the spliceosome B complex. Associated with U2 snRNPs. Binds splicing factors SNRPB, SNRPC and SF1. Interacts via the WW domains with the Pro-rich domains of KHDRBS1/SAM68. Interacts via the WW domains with the Pro-rich domains of WBP11. Interacts with SNRNP200.

It is found in the nucleus. Its subcellular location is the nucleus speckle. In terms of biological role, involved in pre-mRNA splicing as a component of the spliceosome. May play a role in cross-intron bridging of U1 and U2 snRNPs in the mammalian A complex. This chain is WW domain-binding protein 4 (Wbp4), found in Rattus norvegicus (Rat).